We begin with the raw amino-acid sequence, 606 residues long: NADH-ubiquinone oxidoreductase chain 5 (606 aa).

Helical transmembrane passes span 4–24, 43–63, 84–104, 114–134, 140–160, 171–191, 213–233, 241–261, 272–292, 301–320, 325–347, 366–386, 413–433, 457–477, 485–505, and 582–602; these read FSSLTLVTLILLTMPIAAINF, AFITSMIPTMMFIHTGQEMII, FFSMMFVPVALFVTWSIMEFS, INQFFKYLLLFLITMLILVTA, LFIGWEGVGIMSFLLIGWWYG, AILYNRIGDIGFILAMAWFLI, LMGLILAATGKSAQFGLHPWL, TPVSALLHSSTMVVAGIFLLI, FGQSIMLCLGAMTTLFTAMCA, IIAFSTSSQLGLMMVTIGIN, AFLHICTHAFFKAMLFMCSGSII, MPFTTTALIIGSLALTGMPFL, LVATSFTAIYSTRIIFFALLG, LLIGSLFAGFIISNNIPPMTI, YLKMTALTVTILGFILALEIS, and GLIKLYFLSFLITILISTTLL.

This sequence belongs to the complex I subunit 5 family. In terms of assembly, core subunit of respiratory chain NADH dehydrogenase (Complex I) which is composed of 45 different subunits.

The protein localises to the mitochondrion inner membrane. It carries out the reaction a ubiquinone + NADH + 5 H(+)(in) = a ubiquinol + NAD(+) + 4 H(+)(out). In terms of biological role, core subunit of the mitochondrial membrane respiratory chain NADH dehydrogenase (Complex I) which catalyzes electron transfer from NADH through the respiratory chain, using ubiquinone as an electron acceptor. Essential for the catalytic activity and assembly of complex I. This chain is NADH-ubiquinone oxidoreductase chain 5 (MT-ND5), found in Ovis aries (Sheep).